Consider the following 124-residue polypeptide: Glycine cleavage system H protein (124 aa).

The Lipoyl-binding domain occupies 22-103 (VFVVGITDNA…AYTAWIFKIK (82 aa)). K63 is modified (N6-lipoyllysine).

Belongs to the GcvH family. In terms of assembly, the glycine cleavage system is composed of four proteins: P, T, L and H. It depends on (R)-lipoate as a cofactor.

The glycine cleavage system catalyzes the degradation of glycine. The H protein shuttles the methylamine group of glycine from the P protein to the T protein. This is Glycine cleavage system H protein from Bordetella pertussis (strain Tohama I / ATCC BAA-589 / NCTC 13251).